Consider the following 334-residue polypeptide: Ornithine carbamoyltransferase, catabolic (334 aa).

Carbamoyl phosphate-binding positions include 57 to 60, Q84, R108, and 135 to 138; these read STRT and HPTQ. Residues N168, D232, and 236–237 each bind L-ornithine; that span reads SM. Residues 274–275 and R320 contribute to the carbamoyl phosphate site; that span reads CL.

The protein belongs to the aspartate/ornithine carbamoyltransferase superfamily. OTCase family.

Its subcellular location is the cytoplasm. It catalyses the reaction carbamoyl phosphate + L-ornithine = L-citrulline + phosphate + H(+). It functions in the pathway amino-acid degradation; L-arginine degradation via ADI pathway; carbamoyl phosphate from L-arginine: step 2/2. Reversibly catalyzes the transfer of the carbamoyl group from carbamoyl phosphate (CP) to the N(epsilon) atom of ornithine (ORN) to produce L-citrulline. This chain is Ornithine carbamoyltransferase, catabolic (arcB), found in Rhizobium meliloti (strain 1021) (Ensifer meliloti).